The primary structure comprises 550 residues: Invertase (550 aa).

The signal sequence occupies residues 1-22 (MIQLSPLLLLPLFSVFNSIADA). Substrate contacts are provided by residues 39 to 42 (WMND), glutamine 60, and 103 to 104 (FS). Aspartate 42 is a catalytic residue. Residues asparagine 112, asparagine 113, asparagine 119, and asparagine 165 are each glycosylated (N-linked (GlcNAc...) asparagine). 170-171 (RD) provides a ligand contact to substrate. Asparagine 211 carries N-linked (GlcNAc...) asparagine glycosylation. Glutamate 223 contacts substrate. N-linked (GlcNAc...) asparagine glycosylation occurs at asparagine 237. Tryptophan 313 is a binding site for substrate. Residues asparagine 333, asparagine 364, asparagine 398, and asparagine 420 are each glycosylated (N-linked (GlcNAc...) asparagine).

This sequence belongs to the glycosyl hydrolase 32 family.

It carries out the reaction Hydrolysis of terminal non-reducing beta-D-fructofuranoside residues in beta-D-fructofuranosides.. This chain is Invertase (INV1), found in Wickerhamomyces anomalus (Yeast).